The primary structure comprises 140 residues: Organic hydroperoxide resistance protein-like (140 aa).

Belongs to the OsmC/Ohr family.

The protein is Organic hydroperoxide resistance protein-like of Staphylococcus aureus (strain MRSA252).